The sequence spans 543 residues: Carboxypeptidase Y homolog A (543 aa).

The first 17 residues, 1-17 (MKFLTTGLLATAALAAA), serve as a signal peptide directing secretion. Positions 18-124 (QEQQVLQAED…KLHNYDLRVK (107 aa)) are excised as a propeptide. 5 disulfide bridges follow: C179-C419, C313-C327, C337-C360, C344-C353, and C382-C389. An N-linked (GlcNAc...) asparagine glycan is attached at N210. Residue S266 is part of the active site. The active site involves D458. N-linked (GlcNAc...) asparagine glycosylation is present at N509. Residue H520 is part of the active site.

It belongs to the peptidase S10 family.

Its subcellular location is the vacuole. It catalyses the reaction Release of a C-terminal amino acid with broad specificity.. Vacuolar carboxypeptidase involved in degradation of small peptides. Digests preferentially peptides containing an aliphatic or hydrophobic residue in P1' position, as well as methionine, leucine or phenylalanine in P1 position of ester substrate. This is Carboxypeptidase Y homolog A (CPYA) from Trichophyton tonsurans (Scalp ringworm fungus).